We begin with the raw amino-acid sequence, 860 residues long: Ubiquitin carboxyl-terminal hydrolase 13 (860 aa).

Residues 168 to 276 (QVSRHARSLR…EHLLHFGIDM (109 aa)) form a UBP-type; degenerate zinc finger. Zn(2+) is bound by residues C192, C195, C212, and H225. In terms of domain architecture, USP spans 318 to 857 (TGIKNLGNSC…LGYMYFYRRL (540 aa)). C327 serves as the catalytic Nucleophile. Residues 611 to 636 (DLTPPIVIPEDTRDSSTNNSLESPEI) form a disordered region. 2 UBA domains span residues 635-676 (EIDE…IIAH) and 710-750 (QPPE…IFTH). Acidic residues predominate over residues 755 to 768 (DESEAMSDTADTEP). A disordered region spans residues 755-795 (DESEAMSDTADTEPNDNSFSNANAHTDSSLSPDQDLSSPRV). A compositionally biased stretch (polar residues) spans 769–780 (NDNSFSNANAHT). A compositionally biased stretch (low complexity) spans 781 to 793 (DSSLSPDQDLSSP). Residue H819 is the Proton acceptor of the active site.

This sequence belongs to the peptidase C19 family.

It catalyses the reaction Thiol-dependent hydrolysis of ester, thioester, amide, peptide and isopeptide bonds formed by the C-terminal Gly of ubiquitin (a 76-residue protein attached to proteins as an intracellular targeting signal).. Specifically inhibited by spautin-1 (specific and potent autophagy inhibitor-1), a derivative of MBCQ that binds to usp13 and inhibits deubiquitinase activity. In terms of biological role, deubiquitinase that mediates deubiquitination of target proteins and is involved in various processes such as autophagy and endoplasmic reticulum-associated degradation (ERAD). In Danio rerio (Zebrafish), this protein is Ubiquitin carboxyl-terminal hydrolase 13 (usp13).